Here is a 307-residue protein sequence, read N- to C-terminus: Acyl transferase (307 aa).

Active-site charge relay system residues include S116, D213, and H243.

This sequence belongs to the LuxD family.

It participates in lipid metabolism; fatty acid reduction for biolumincescence. Functionally, acyl transferase is part of the fatty acid reductase system required for aldehyde biosynthesis; it produces fatty acids for the luminescent reaction. The protein is Acyl transferase of Photorhabdus luminescens (Xenorhabdus luminescens).